The chain runs to 135 residues: uncharacterized protein (135 aa).

A HotDog ACOT-type domain is found at 8–123 (PQGTIVLKTL…IFIYVAIDET (116 aa)).

Belongs to the acyl coenzyme A hydrolase family.

This is an uncharacterized protein from Buchnera aphidicola subsp. Schizaphis graminum (strain Sg).